Consider the following 249-residue polypeptide: MDTDGDNDVFGSGNDTRNNDDKKKEEMKQNISDNSQIISTRDHEADIIGSISKEDLSKIVVRVDRHDALSANDVQSFREAMINFMRDKDPNRNQPSDKLIIAMEVGVYQMVINLGTSAKLGNANNLEFTIAYDQETRTYKVADFVNYMQSRMRNSPNVVRQYARAMEKTINNIRSAGIINSNGVLAAKHGVLASYRNSYSDFAVGFGNDTTDAQLTSLMLARKQALCKGEGGSVEHYNTMQLANLKHPC.

Positions 1–33 are disordered; that stretch reads MDTDGDNDVFGSGNDTRNNDDKKKEEMKQNISD. The span at 17-28 shows a compositional bias: basic and acidic residues; that stretch reads RNNDDKKKEEMK.

Belongs to the closteroviridae capsid protein family.

The protein resides in the virion. In terms of biological role, capsid protein self-assembles to form filamentous capsids, about 650-850 nm in length. The protein is Capsid protein of Beta vulgaris (Sugar beet).